The following is a 350-amino-acid chain: GTPase Obg (350 aa).

The Obg domain maps to 1 to 159 (MKLVDEAEIL…RLLKLELKLL (159 aa)). The 178-residue stretch at 160 to 337 (ADVGLLGFPN…IMKDVMAFFD (178 aa)) folds into the OBG-type G domain. Residues 166 to 173 (GFPNAGKS), 191 to 195 (FTTLY), 213 to 216 (DVPG), 287 to 290 (NKAD), and 318 to 320 (SAL) each bind GTP. Residues Ser-173 and Thr-193 each contribute to the Mg(2+) site.

This sequence belongs to the TRAFAC class OBG-HflX-like GTPase superfamily. OBG GTPase family. Monomer. It depends on Mg(2+) as a cofactor.

Its subcellular location is the cytoplasm. An essential GTPase which binds GTP, GDP and possibly (p)ppGpp with moderate affinity, with high nucleotide exchange rates and a fairly low GTP hydrolysis rate. Plays a role in control of the cell cycle, stress response, ribosome biogenesis and in those bacteria that undergo differentiation, in morphogenesis control. This is GTPase Obg from Xanthomonas campestris pv. campestris (strain 8004).